The following is a 460-amino-acid chain: MAHSRARRRKRASATQLYQTCKAAGTCPSDIIPKVEHNTIADQILKWGSLGVFFGGLGIGTGSGTGGRTGYIPLQSTPRPEIPSGPTTRPPILVDTVAPGDPSIVSLVEESAIINSGAPELVPPSHGGFEITTSESTTPAILDVSVTTHTTSTSVFRNPSFADPSVVQSQPAVEAGGHILISTSTISSHPVEEIPLDTFIVSSSDSNPASSTPIPASGARPRIGLYSKALHQVQVTDPAFLSSPQRLITFDNPAYEGEDVSLEFAHNTIHQPPDDAFMDIIRLHRPAIQSRRGRVRFSRIGQRGSMYTRSGKHIGGRIHFYQDISPISAAAEEIELHPLVATAHDTSLFDIYAEPDPDFTEEPVPLSFSTSTPFQRSSVSATPWGNTTVPLSLPGDMFVQPGPDIIFPTASTTTPYSPVTPALPTGPVFISGATFYLYPAWYFARKRRKRVSLFFADVAA.

The short motif at 1–12 (MAHSRARRRKRA) is the Nuclear localization signal element. Residues C21 and C27 are joined by a disulfide bond. Residues 443 to 451 (FARKRRKRV) carry the Nuclear localization signal motif.

This sequence belongs to the papillomaviridae L2 protein family. As to quaternary structure, interacts with major capsid protein L1. Interacts with E2; this interaction inhibits E2 transcriptional activity but not the DNA replication function E2. Interacts with host GADD45GIP1. Interacts with host HSPA8; this interaction is required for L2 nuclear translocation. Interacts with host importins KPNB2 and KPNB3. Forms a complex with importin alpha2-beta1 heterodimers via interaction with the importin alpha2 adapter. Interacts with host DYNLT1; this interaction is essential for virus intracellular transport during entry. Interacts (via C-terminus) with host retromer subunits VPS35 and VPS29. In terms of processing, highly phosphorylated.

It localises to the virion. The protein resides in the host nucleus. The protein localises to the host early endosome. It is found in the host Golgi apparatus. In terms of biological role, minor protein of the capsid that localizes along the inner surface of the virion, within the central cavities beneath the L1 pentamers. Plays a role in capsid stabilization through interaction with the major capsid protein L1. Once the virion enters the host cell, L2 escorts the genomic DNA into the nucleus by promoting escape from the endosomal compartments and traffic through the host Golgi network. Mechanistically, the C-terminus of L2 possesses a cell-penetrating peptide that protudes from the host endosome, interacts with host cytoplasmic retromer cargo and thereby mediates the capsid delivery to the host trans-Golgi network. Plays a role through its interaction with host dynein in the intracellular microtubule-dependent transport of viral capsid toward the nucleus. Mediates the viral genome import into the nucleus through binding to host importins. Once within the nucleus, L2 localizes viral genomes to host PML bodies in order to activate early gene expression for establishment of infection. Later on, promotes late gene expression by interacting with the viral E2 protein and by inhibiting its transcriptional activation functions. During virion assembly, encapsidates the genome by direct interaction with the viral DNA. In Homo sapiens (Human), this protein is Minor capsid protein L2.